Reading from the N-terminus, the 1205-residue chain is Partitioning defective 3 homolog B (1205 aa).

2 disordered regions span residues 83–104 (EPLH…PDAF) and 137–165 (VRRS…SLKL). S100 carries the phosphoserine modification. The 89-residue stretch at 201 to 289 (TRTVEISGEG…SPSVLLHVLP (89 aa)) folds into the PDZ 1 domain. The interval 318–374 (VPPPVHGKSGLKTANLTGTDSPETDASASLQQNKSPRVPRLGGKPSSPSLSPLMGFG) is disordered. Residues 329–352 (KTANLTGTDSPETDASASLQQNKS) show a composition bias toward polar residues. Phosphoserine occurs at positions 346, 352, and 368. Positions 356–374 (PRLGGKPSSPSLSPLMGFG) are enriched in low complexity. 2 consecutive PDZ domains span residues 383-468 (KIDL…VIAR) and 498-585 (EIPL…GMIQ). S635, S710, S728, S730, S746, S749, and S801 each carry phosphoserine. The segment at 707-743 (ASKSMDLVPDESKVHSLAGQKSESPSKDFGPTLGLKK) is disordered. Disordered stretches follow at residues 784–921 (AIDK…KHQE) and 1111–1205 (PYYP…TAAV). Residues 806–822 (HSGQGALNCESAPQGNS) are compositionally biased toward polar residues. Basic and acidic residues-rich tracts occupy residues 838 to 865 (KEKE…DPER) and 881 to 921 (KKED…KHQE). At S1184 the chain carries Phosphoserine.

This sequence belongs to the PAR3 family. Interacts with PARD6B. Interacts with INSC/inscuteable. As to expression, highly expressed in kidney, lung and skeletal muscle. Expressed at intermediate levels in brain, heart, placenta, liver and pancreas. Isoform 1 is predominant, while isoform 2 and isoform 3 are expressed at lower levels.

The protein resides in the endomembrane system. The protein localises to the cell junction. It localises to the tight junction. In terms of biological role, putative adapter protein involved in asymmetrical cell division and cell polarization processes. May play a role in the formation of epithelial tight junctions. The chain is Partitioning defective 3 homolog B (PARD3B) from Homo sapiens (Human).